The sequence spans 945 residues: Leucine--tRNA ligase (945 aa).

Positions proline 43 to histidine 53 match the 'HIGH' region motif. The 'KMSKS' region signature appears at lysine 638–serine 642. An ATP-binding site is contributed by lysine 641.

This sequence belongs to the class-I aminoacyl-tRNA synthetase family.

It localises to the cytoplasm. It catalyses the reaction tRNA(Leu) + L-leucine + ATP = L-leucyl-tRNA(Leu) + AMP + diphosphate. This Pyrobaculum arsenaticum (strain DSM 13514 / JCM 11321 / PZ6) protein is Leucine--tRNA ligase.